A 630-amino-acid chain; its full sequence is MPLTIEQLKQYNEKMAAKGEEDDAPAPVLLLDKYRVRVLPLTSIPFVMNHSSVSQLSLSSEDVLVVDFPSKGTGSGAGKAEKKMIFKKKIEPMEDSFEDKENVNEGGPLMTSFLTLEKLRKGMVGDVEIIGYECETSFFDANPIPLSDGVSLQRYIRLNCSEHFSPSISTLPVWISTTSSKFPSICWLAAGRTNRNVQFAAATRVLGHFNNENSERVVKQLNQACGTSQLNKYRAVYEEIRKIATENRPAPGEVTIDVRWSTKSTLVLLEHPDNAADCTIKIDLGWGDKRFFVDDEIFEQLFFVLNLADVLANPDNEVIFPMAPPANFDDLVQEMDALVEASSREDNVFVSNENFRGGDITDKVWNIVRKCNDVKQVTLLFRNFLQALAYGKIKSHAQERNKSHLASLIRISKSSEFKIPVLERLSTIDMMMEIGVESLRRRVIDIFSSQLLYPSDELEFILQTCENDLPAGNGAMNSAAISLLPITMALATANRIYELLNEKDHVILPDLTRRILQKYTASMIEKSRRGETETEYTFETTLPLLRMYKEGFMSKRPCIWTCENSNTVGANVQARVLTSLELQPSLEHINRLVNDSRPVWTATEEKPAMIKDLNADYTVVHTIFSYLPKM.

The protein belongs to the ZWILCH family. As to quaternary structure, component of the RZZ complex composed of rod-1, czw-1 and zwl-1. Interacts with the spindly-like protein spdl-1. Interacts with NDC80 complex component ndc-80.

The protein resides in the cytoplasm. It localises to the cell cortex. Its subcellular location is the chromosome. The protein localises to the centromere. It is found in the kinetochore. The protein resides in the cytoskeleton. It localises to the spindle. Its function is as follows. Essential component of the mitotic checkpoint, which prevents cells from prematurely exiting mitosis. Required for chromosome segregation, the assembly of the dynein-dynactin and mdf-1-mdf-2 complexes onto kinetochores and spindle pole separation. Its function related to the spindle assembly machinery and kinetochore-microtubule attachments likely depends on its association in the mitotic RZZ complex. The RZZ complex recruits the spindly-like protein spdl-1 to kinetochores. To prevent irregular chromosome segregation, the complex also inhibits the attachment of the kinetochore-associated NDC80 complex to microtubules. The recruitment of spdl-1 to kinetochores relieves this inhibition. Required for embryonic development. This is Protein zwilch homolog (zwl-1) from Caenorhabditis elegans.